The following is a 328-amino-acid chain: Ankyrin repeat domain-containing protein 2 (328 aa).

S36 is subject to Phosphoserine. S68 is subject to Phosphoserine; by PKB/AKT2. The interval 96 to 116 (RDALAAAQEPPPEPEEITGPV) is disordered. 5 ANK repeats span residues 116–145 (VNEE…SADT), 149–178 (FRRT…TVDF), 182–211 (LDCT…DTNV), 215–244 (LLST…DINA), and 248–277 (EGDS…DMMA). A disordered region spans residues 297–328 (RHALEHPEPESEQNGLERPGSGRETPQPIPAQ).

As to quaternary structure, interacts with ID3; both proteins cooperate in myoblast differentiation. Interacts with TTN/titin. Interacts (via ANK repeats) with TCAP; the interaction is direct. Interacts with TJP1 (via PDZ domains). Interacts with PML; the interaction is direct. Interacts with p53/TP53. Interacts with YBX1. Interacts with AKT2. Phosphorylation at Ser-68 by PKB/AKT2 in response to oxidative stress induces translocation to the nucleus and negatively regulates myoblast differentiation. In terms of tissue distribution, expressed by myoblasts (at protein level). Expressed in skeletal and cardiac muscles.

The protein localises to the cytoplasm. It localises to the myofibril. It is found in the sarcomere. The protein resides in the i band. Its subcellular location is the cytosol. The protein localises to the nucleus. It localises to the PML body. Its function is as follows. Functions as a negative regulator of myocyte differentiation. May interact with both sarcoplasmic structural proteins and nuclear proteins to regulate gene expression during muscle development and in response to muscle stress. The sequence is that of Ankyrin repeat domain-containing protein 2 (Ankrd2) from Mus musculus (Mouse).